The following is a 271-amino-acid chain: Formamidopyrimidine-DNA glycosylase (271 aa).

Catalysis depends on P2, which acts as the Schiff-base intermediate with DNA. The active-site Proton donor is the E3. The active-site Proton donor; for beta-elimination activity is the K57. 3 residues coordinate DNA: H90, R109, and R151. An FPG-type zinc finger spans residues 236–270; it reads MVYGRAGEACVTCKTKLQEIRQSNRSSVFCPSCQQ. The active-site Proton donor; for delta-elimination activity is the R260.

The protein belongs to the FPG family. Monomer. Zn(2+) is required as a cofactor.

It catalyses the reaction Hydrolysis of DNA containing ring-opened 7-methylguanine residues, releasing 2,6-diamino-4-hydroxy-5-(N-methyl)formamidopyrimidine.. It carries out the reaction 2'-deoxyribonucleotide-(2'-deoxyribose 5'-phosphate)-2'-deoxyribonucleotide-DNA = a 3'-end 2'-deoxyribonucleotide-(2,3-dehydro-2,3-deoxyribose 5'-phosphate)-DNA + a 5'-end 5'-phospho-2'-deoxyribonucleoside-DNA + H(+). Functionally, involved in base excision repair of DNA damaged by oxidation or by mutagenic agents. Acts as a DNA glycosylase that recognizes and removes damaged bases. Has a preference for oxidized purines, such as 7,8-dihydro-8-oxoguanine (8-oxoG). Has AP (apurinic/apyrimidinic) lyase activity and introduces nicks in the DNA strand. Cleaves the DNA backbone by beta-delta elimination to generate a single-strand break at the site of the removed base with both 3'- and 5'-phosphates. The sequence is that of Formamidopyrimidine-DNA glycosylase from Colwellia psychrerythraea (strain 34H / ATCC BAA-681) (Vibrio psychroerythus).